The sequence spans 1091 residues: ATP-citrate synthase (1091 aa).

Residues lysine 4–lysine 265 enclose the ATP-grasp domain. Positions 58, 66, 67, 109, 111, and 118 each coordinate ATP. Tyrosine 131 is modified (phosphotyrosine). Aspartate 216 serves as a coordination point for ATP. 3 residues coordinate Mg(2+): aspartate 257, serine 260, and alanine 262. Position 263 is a phosphoserine (serine 263). The citrate site is built by glycine 309, asparagine 346, threonine 348, tyrosine 364, and arginine 379. Residues serine 442–serine 457 show a composition bias toward low complexity. The segment at serine 442 to lysine 471 is disordered. Threonine 447 carries the post-translational modification Phosphothreonine. Phosphoserine is present on serine 451. The residue at position 455 (serine 455) is a Phosphoserine; by PKA and PKB/AKT1 or PKB/AKT2 or BCKDK. Serine 459 bears the Phosphoserine mark. 3 positions are modified to N6-acetyllysine; alternate: lysine 530, lysine 536, and lysine 544. Glycyl lysine isopeptide (Lys-Gly) (interchain with G-Cter in ubiquitin); alternate cross-links involve residues lysine 530, lysine 536, and lysine 544. Threonine 629 carries the post-translational modification Phosphothreonine. A Phosphoserine modification is found at serine 653. The residue at position 672 (tyrosine 672) is a Phosphotyrosine. Histidine 750 acts as the Tele-phosphohistidine intermediate in catalysis. A CoA-binding site is contributed by leucine 769 to serine 779. Phosphoserine is present on serine 829. 4 positions are modified to N6-acetyllysine: lysine 938, lysine 958, lysine 968, and lysine 1067. Position 1090 is a phosphoserine (serine 1090).

It in the N-terminal section; belongs to the succinate/malate CoA ligase beta subunit family. This sequence in the C-terminal section; belongs to the succinate/malate CoA ligase alpha subunit family. As to quaternary structure, homotetramer. It depends on Mg(2+) as a cofactor. In terms of processing, phosphorylated by PKA and GSK3 in a sequential manner; phosphorylation results in activation of its activity. Phosphorylation on Thr-447 and Ser-451 depends on the phosphorylation state of Ser-455. Phosphorylation on Ser-455 is decreased by prior phosphorylation on the other 2 residues. Phosphorylated at Ser-455 by BCKDK and dephosphorylated by protein phosphatase PPM1K. Post-translationally, ISGylated. Acetylated at Lys-530, Lys-536 and Lys-544 by KAT2B/PCAF. Acetylation is promoted by glucose and stabilizes the protein, probably by preventing ubiquitination at the same sites. Acetylation promotes de novo lipid synthesis. Deacetylated by SIRT2. In terms of processing, ubiquitinated at Lys-530, Lys-536 and Lys-544 by the BCR(KLHL25) E3 ubiquitin ligase complex and UBR4, leading to its degradation. Ubiquitination is probably inhibited by acetylation at same site. BCR(KLHL25)-mediated degradation of ACLY promotes fatty acid oxidation and is required for differentiation of inducible regulatory T (iTreg) cells.

The protein localises to the cytoplasm. Its subcellular location is the cytosol. It carries out the reaction oxaloacetate + acetyl-CoA + ADP + phosphate = citrate + ATP + CoA. With respect to regulation, phosphorylation results in activation of its activity. Glucose 6-phosphate, fructose 6-phosphate, fructose 2,6-bisphosphate, ribulose 5-phosphate, and fructose 1,6-bisphosphate also act as activators. Functionally, catalyzes the cleavage of citrate into oxaloacetate and acetyl-CoA, the latter serving as common substrate in multiple biochemical reactions in protein, carbohydrate and lipid metabolism. This chain is ATP-citrate synthase (ACLY), found in Bos taurus (Bovine).